The chain runs to 390 residues: RNA polymerase sigma factor SigA (390 aa).

Over residues 48-57 the composition is skewed to acidic residues; it reads FLEPQTDEDD. Residues 48–75 are disordered; the sequence is FLEPQTDEDDAKSGKAAKSRRRTQSKKK. Residues 62–75 are compositionally biased toward basic residues; it reads KAAKSRRRTQSKKK. The tract at residues 158 to 228 is sigma-70 factor domain-2; the sequence is MVQSNLRLVV…TRAIADQSRT (71 aa). An Interaction with polymerase core subunit RpoC motif is present at residues 182-185; sequence DLIQ. Residues 237 to 312 are sigma-70 factor domain-3; sequence ETISRIKKTT…ESDGETPEDQ (76 aa). A sigma-70 factor domain-4 region spans residues 325–378; sequence VLDSLSPRERDVLRLRYGLDDGRMKTLEEIGQIFNVTRERIRQIEAKALRKLRH. The segment at residues 351–370 is a DNA-binding region (H-T-H motif); the sequence is LEEIGQIFNVTRERIRQIEA.

It belongs to the sigma-70 factor family. RpoD/SigA subfamily. As to quaternary structure, interacts transiently with the RNA polymerase catalytic core.

The protein resides in the cytoplasm. In terms of biological role, sigma factors are initiation factors that promote the attachment of RNA polymerase to specific initiation sites and are then released. This sigma factor is the primary sigma factor during exponential growth. This Nostoc sp. (strain PCC 7120 / SAG 25.82 / UTEX 2576) protein is RNA polymerase sigma factor SigA.